Reading from the N-terminus, the 174-residue chain is DNA replication inhibitor plutonium (174 aa).

2 ANK repeats span residues 39–68 (YGNT…NIFA) and 72–103 (FGQN…DFNL). Thr-167 is subject to Phosphothreonine.

Inhibits DNA replication early in developments. May bind and block the action of a replication or initiation factor. The polypeptide is DNA replication inhibitor plutonium (plu) (Drosophila melanogaster (Fruit fly)).